We begin with the raw amino-acid sequence, 596 residues long: Sodium/mannose cotransporter SLC5A10 (596 aa).

At 1 to 15 (MAANSTSDLHTPGTQ) the chain is on the extracellular side. N-linked (GlcNAc...) asparagine glycosylation is present at asparagine 4. A helical membrane pass occupies residues 16 to 36 (LSVADIIVITVYFALNVAVGI). Topologically, residues 37–72 (WSSCRASRNTVNGYFLAGRDMTWWPIGASLFASSEG) are cytoplasmic. Residues 73 to 93 (SGLFIGLAGSGAAGGLAVAGF) traverse the membrane as a helical segment. Topologically, residues 94–99 (EWNATY) are extracellular. A glycan (N-linked (GlcNAc...) asparagine) is linked at asparagine 96. The helical transmembrane segment at 100 to 120 (VLLALAWVFVPIYISSEIVTL) threads the bilayer. The Cytoplasmic segment spans residues 121–149 (PEYIQKRYGGQRIRMYLSVLSLLLSVFTK). Residues serine 141 and serine 145 each carry the phosphoserine modification. The residue at position 148 (threonine 148) is a Phosphothreonine. The helical transmembrane segment at 150–170 (ISLDLYAGALFVHICLGWNFY) threads the bilayer. Residues 171-173 (LST) are Extracellular-facing. The helical transmembrane segment at 174–194 (ILTLGITALYTIAGGLAAVIY) threads the bilayer. Topologically, residues 195–200 (TDALQT) are cytoplasmic. Residues 201–221 (LIMVVGAVILTIKAFDQIGGY) form a helical membrane-spanning segment. The Extracellular segment spans residues 222-264 (GQLEAAYAQAIPSRTIANTTCHLPRTDAMHMFRDPHTGDLPWT). The chain crosses the membrane as a helical span at residues 265 to 285 (GMTFGLTIMATWYWCTDQVIV). At 286-300 (QRSLSARDLNHAKAG) the chain is on the cytoplasmic side. A helical transmembrane segment spans residues 301–321 (SILASYLKMLPMGLIIMPGMI). Residues 322-355 (SRALFPDDVGCVVPSECLRACGAEVGCSNIAYPK) lie on the Extracellular side of the membrane. Residues 356-376 (LVMELMPIGLRGLMIAVMLAA) traverse the membrane as a helical segment. Residues 377-409 (LMSSLTSIFNSSSTLFTMDIWRRLRPRSGEREL) lie on the Cytoplasmic side of the membrane. A helical membrane pass occupies residues 410–430 (LLVGRLVIVALIGVSVAWIPV). At 431–443 (LQDSNSGQLFIYM) the chain is on the extracellular side. Residues 444–464 (QSVTSSLAPPVTAVFVLGVFW) form a helical membrane-spanning segment. Topologically, residues 465-471 (RRANEQG) are cytoplasmic. The chain crosses the membrane as a helical span at residues 472 to 492 (AFWGLIAGLVVGATRLVLEFL). At 493–513 (NPAPPCGEPDTRPAVLGSIHY) the chain is on the extracellular side. Residues 514-534 (LHFAVALFALSGAVVVAGSLL) traverse the membrane as a helical segment. The Cytoplasmic segment spans residues 535-575 (TPPPQSVQIENLTWWTLAQDVPLGTKAGDGQTPQKHAFWAR). The helical transmembrane segment at 576-596 (VCGFNAILLMCVNIFFYAYFA) threads the bilayer.

Belongs to the sodium:solute symporter (SSF) (TC 2.A.21) family. Predominantly expressed at high levels in kidney. Very low expression is detected in testes. In terms of tissue distribution, expressed in kidney. As to expression, the most abundant isoform expressed in kidney.

The protein localises to the apical cell membrane. The enzyme catalyses D-mannose(out) + Na(+)(out) = D-mannose(in) + Na(+)(in). It catalyses the reaction D-fructopyranose(out) + Na(+)(out) = D-fructopyranose(in) + Na(+)(in). Inhibited by phlorizin. Functionally, electrogenic Na+-coupled sugar symporter that actively transports D-mannose or D-fructose at the plasma membrane, with a Na+ to sugar coupling ratio of 1:1. Transporter activity is driven by a transmembrane Na+ electrochemical gradient set by the Na+/K+ pump. Exclusively recognizes sugar substrates having a pyranose ring with an axial hydroxyl group on carbon 2. Has likely evolved to enable renal reabsorption of D-mannose, an important constituent of oligosaccharide chains of glycoproteins. Contributes to dietary D-fructose reabsorption from glomerular filtrate across the brush border of the kidney. Its function is as follows. Appears to have no transporter activity. This Homo sapiens (Human) protein is Sodium/mannose cotransporter SLC5A10 (SLC5A10).